Here is a 398-residue protein sequence, read N- to C-terminus: Lysophospholipid transporter LplT (398 aa).

A run of 11 helical transmembrane segments spans residues 19–39 (VIAA…ATLA), 53–73 (ILQM…GQVA), 91–111 (LGAA…LVGI), 139–159 (LMEA…GVLA), 164–184 (IAAL…NLFI), 227–247 (LFWG…PVAL), 257–277 (YLNA…AKLV), 281–301 (TVAR…IFSL), 304–324 (ALLP…FFVV), 350–370 (GENS…LVGI), and 372–392 (VVAI…ALWI).

This sequence belongs to the major facilitator superfamily. LplT (TC 2.A.1.42) family.

It localises to the cell inner membrane. In terms of biological role, catalyzes the facilitated diffusion of 2-acyl-glycero-3-phosphoethanolamine (2-acyl-GPE) into the cell. This Citrobacter koseri (strain ATCC BAA-895 / CDC 4225-83 / SGSC4696) protein is Lysophospholipid transporter LplT.